Consider the following 584-residue polypeptide: MKNLQRPSGMPAHKYTPYHQNFPFDMSDRTWPDKVATTAPRWCAVDLRDGNQALIDPMDSERKLRMFQLLVGMGYKEIEVGFPSASQTDFDFVRTLVEGGHIPEDVSIQVLTQSREHLIERTYEAIDGAPNAIVHLYNSTSTLQRRVVFHQDMDGIVDIALTGARLCRKYEEQLSGTAVTYEYSPESYTGTELEFAARICNEVAETFEIGNGRKMIVNLPATVEMATPNVYADSIEWMGRHLYQREDIILSLHPHNDRGTGVAAAELGYLAGADRIEGCLFGNGERTGNVDLVTLGLNLLTQGVDPQIDFSDIEEIRRTVEYCNQLPVPERSPYGGDLVFTAFSGSHQDAIKKGFEAMERDAEQQGVGVDELEWAVPYLPIDPKDVGRSYEAVIRVNSQSGKGGVAYLLKSEYGIDLPRRAQIEFSGVVQKFTETSGSEVSAQQLWTIFRDEYLPSRDGSGSTWGHYRITSISTHAEDQANTVLEIGLDVGGEHKERTAQGTGPIDALINLFNREGMDVRLLDYTEHTLSASANAQAASYVELAVGDRVLWGAGMDSNTTRASLKAVISAVNRAVRDAQEAAQD.

Positions 40–314 (PRWCAVDLRD…DPQIDFSDIE (275 aa)) constitute a Pyruvate carboxyltransferase domain. Mg(2+)-binding residues include aspartate 49, histidine 253, histidine 255, and asparagine 289. Residues 456–584 (SRDGSGSTWG…VRDAQEAAQD (129 aa)) form a regulatory domain region.

This sequence belongs to the alpha-IPM synthase/homocitrate synthase family. LeuA type 2 subfamily. As to quaternary structure, homodimer. Requires Mg(2+) as cofactor.

It is found in the cytoplasm. It carries out the reaction 3-methyl-2-oxobutanoate + acetyl-CoA + H2O = (2S)-2-isopropylmalate + CoA + H(+). Its pathway is amino-acid biosynthesis; L-leucine biosynthesis; L-leucine from 3-methyl-2-oxobutanoate: step 1/4. Functionally, catalyzes the condensation of the acetyl group of acetyl-CoA with 3-methyl-2-oxobutanoate (2-ketoisovalerate) to form 3-carboxy-3-hydroxy-4-methylpentanoate (2-isopropylmalate). This chain is 2-isopropylmalate synthase, found in Kocuria rhizophila (strain ATCC 9341 / DSM 348 / NBRC 103217 / DC2201).